Reading from the N-terminus, the 382-residue chain is Lipid-A-disaccharide synthase (382 aa).

Belongs to the LpxB family.

It carries out the reaction 2-N,3-O-bis[(3R)-3-hydroxytetradecanoyl]-alpha-D-glucosaminyl 1-phosphate + UDP-2-N,3-O-bis[(3R)-3-hydroxytetradecanoyl]-alpha-D-glucosamine = lipid A disaccharide (E. coli) + UDP + H(+). It catalyses the reaction a lipid X + a UDP-2-N,3-O-bis[(3R)-3-hydroxyacyl]-alpha-D-glucosamine = a lipid A disaccharide + UDP + H(+). It functions in the pathway glycolipid biosynthesis; lipid IV(A) biosynthesis; lipid IV(A) from (3R)-3-hydroxytetradecanoyl-[acyl-carrier-protein] and UDP-N-acetyl-alpha-D-glucosamine: step 5/6. In terms of biological role, condensation of UDP-2,3-diacylglucosamine and 2,3-diacylglucosamine-1-phosphate to form lipid A disaccharide, a precursor of lipid A, a phosphorylated glycolipid that anchors the lipopolysaccharide to the outer membrane of the cell. The sequence is that of Lipid-A-disaccharide synthase from Shigella dysenteriae serotype 1 (strain Sd197).